The primary structure comprises 193 residues: Potassium-transporting ATPase KdpC subunit (193 aa).

Residues 14–34 (ITFTFLVLCGLVYPLIVTGIA) traverse the membrane as a helical segment.

The protein belongs to the KdpC family. As to quaternary structure, the system is composed of three essential subunits: KdpA, KdpB and KdpC.

It is found in the cell membrane. Part of the high-affinity ATP-driven potassium transport (or Kdp) system, which catalyzes the hydrolysis of ATP coupled with the electrogenic transport of potassium into the cytoplasm. This subunit acts as a catalytic chaperone that increases the ATP-binding affinity of the ATP-hydrolyzing subunit KdpB by the formation of a transient KdpB/KdpC/ATP ternary complex. The sequence is that of Potassium-transporting ATPase KdpC subunit from Bacillus thuringiensis subsp. konkukian (strain 97-27).